Consider the following 372-residue polypeptide: B2 bradykinin receptor (372 aa).

The Extracellular segment spans residues 1 to 34; it reads MFNITSQVSALNATLAQGNSCLDAEWWSWLNTIQ. 2 N-linked (GlcNAc...) asparagine glycosylation sites follow: Asn3 and Asn12. A helical transmembrane segment spans residues 35–58; the sequence is APFLWVLFVLAVLENIFVLSVFFL. The Cytoplasmic segment spans residues 59–67; sequence HKSSCTVAE. A helical transmembrane segment spans residues 68–92; sequence IYLGNLAVADLILAFGLPFWAITIA. The Extracellular segment spans residues 93–105; sequence NNFDWLFGEVLCR. An intrachain disulfide couples Cys104 to Cys185. A helical membrane pass occupies residues 106-127; the sequence is MVNTMIQMNMYSSICFLMLVSI. The Cytoplasmic segment spans residues 128–149; that stretch reads DRYLALVKTMSMGRMRGVRWAK. Tyr130 bears the Phosphotyrosine mark. Residues 150 to 172 form a helical membrane-spanning segment; sequence LYSLVIWGCALLLSSPMLVFRTM. Residues 173-195 are Extracellular-facing; that stretch reads KDYRDEGHNVTACLIIYPSLTWQ. N-linked (GlcNAc...) asparagine glycosylation occurs at Asn181. Residues 196 to 222 form a helical membrane-spanning segment; sequence VFTNVLLNLVGFLLPLSIITFCTVQIM. Topologically, residues 223–241 are cytoplasmic; that stretch reads QVLRNNEMQKFKEIQTERR. Residues 242 to 266 traverse the membrane as a helical segment; sequence ATVLVLAVLLLFVVCWLPFQIGTFL. Over 267 to 284 the chain is Extracellular; the sequence is DTLRLLGFLPGCWEHVID. A helical transmembrane segment spans residues 285 to 308; sequence LITQISSYLAYSNSCLNPLVYVIV. Over 309–364 the chain is Cytoplasmic; it reads GKRFRKKSREVYHGLCRSGGCVSEPAQSENSMGTLRTSISVDRQIHKLQDWARSSS. Residue Tyr320 is modified to Phosphotyrosine. Residue Cys324 is the site of S-palmitoyl cysteine attachment. At Ser339 the chain carries Phosphoserine. At Thr342 the chain carries Phosphothreonine. Phosphoserine; by GRK6 occurs at positions 346 and 348.

Belongs to the G-protein coupled receptor 1 family. Bradykinin receptor subfamily. BDKRB2 sub-subfamily. Forms a complex with PECAM1 and GNAQ. Interacts with PECAM1.

It is found in the cell membrane. In terms of biological role, receptor for bradykinin. It is associated with G proteins that activate a phosphatidylinositol-calcium second messenger system. In Cavia porcellus (Guinea pig), this protein is B2 bradykinin receptor (BDKRB2).